The primary structure comprises 299 residues: MTDNTRLRIAMQKSGRLSDDSRELLARCGIKINLHTQRLIAMAENMPIDILRVRDDDIPGLVMDGVVDLGIIGENVLEEELLNRRAQGEDPRYFTLRRLDFGGCRLSLATPVDEAWDGPLSLNGKRIATSYPHLLKRYLDQKGICFKSCLLNGSVEVAPRAGLADAICDLVSTGATLEANGLREVEVIYRSKACLIQRDGEMEESKQQLIDKLLTRIQGVIQARESKYIMMHAPTERLDEVIALLPGAERPTILPLAGDQQRVAMHMVSSETLFWETMEKLKALGASSILVLPIEKMME.

It belongs to the ATP phosphoribosyltransferase family. Long subfamily. As to quaternary structure, equilibrium between an active dimeric form, an inactive hexameric form and higher aggregates. Interconversion between the various forms is largely reversible and is influenced by the natural substrates and inhibitors of the enzyme. Mg(2+) is required as a cofactor.

It is found in the cytoplasm. The catalysed reaction is 1-(5-phospho-beta-D-ribosyl)-ATP + diphosphate = 5-phospho-alpha-D-ribose 1-diphosphate + ATP. The protein operates within amino-acid biosynthesis; L-histidine biosynthesis; L-histidine from 5-phospho-alpha-D-ribose 1-diphosphate: step 1/9. Its activity is regulated as follows. Feedback inhibited by histidine. In terms of biological role, catalyzes the condensation of ATP and 5-phosphoribose 1-diphosphate to form N'-(5'-phosphoribosyl)-ATP (PR-ATP). Has a crucial role in the pathway because the rate of histidine biosynthesis seems to be controlled primarily by regulation of HisG enzymatic activity. The polypeptide is ATP phosphoribosyltransferase (Escherichia coli O81 (strain ED1a)).